A 384-amino-acid polypeptide reads, in one-letter code: Galactokinase (384 aa).

Position 34–37 (34–37 (EHTD)) interacts with substrate. 123–129 (SSGLSSS) is a binding site for ATP. Residues serine 129 and glutamate 161 each coordinate Mg(2+). The Proton acceptor role is filled by aspartate 173. Tyrosine 222 contributes to the substrate binding site.

Belongs to the GHMP kinase family. GalK subfamily.

Its subcellular location is the cytoplasm. It carries out the reaction alpha-D-galactose + ATP = alpha-D-galactose 1-phosphate + ADP + H(+). Its pathway is carbohydrate metabolism; galactose metabolism. Its function is as follows. Catalyzes the transfer of the gamma-phosphate of ATP to D-galactose to form alpha-D-galactose-1-phosphate (Gal-1-P). This is Galactokinase from Haemophilus influenzae (strain PittGG).